The following is a 185-amino-acid chain: NADH-dependent FMN reductase AsuE2 (185 aa).

Positions 1–13 (MSTHTARRAGATA) are enriched in low complexity. Residues 1 to 24 (MSTHTARRAGATAGHDRDRGTEPG) form a disordered region. Residues 14–24 (GHDRDRGTEPG) show a composition bias toward basic and acidic residues.

It belongs to the non-flavoprotein flavin reductase family. As to quaternary structure, does not interact with AsuE1, suggesting a possible transient interaction between the two enzymes instead of formation of a stable complex.

It catalyses the reaction FMNH2 + NAD(+) = FMN + NADH + 2 H(+). The protein operates within antibiotic biosynthesis. Functionally, involved in the biosynthesis of the antibiotic asukamycin. When flavin concentration is low, AsuE2 assists the protoasukamycin 4-monooxygenase AsuE1 by providing a reduced form of flavin, enhancing AsuE1 activity. The protein is NADH-dependent FMN reductase AsuE2 of Streptomyces nodosus subsp. asukaensis.